Consider the following 234-residue polypeptide: Flagellar L-ring protein (234 aa).

The N-terminal stretch at Met-1 to Gly-15 is a signal peptide. Cys-16 is lipidated: N-palmitoyl cysteine. Cys-16 carries the S-diacylglycerol cysteine lipid modification.

It belongs to the FlgH family. In terms of assembly, the basal body constitutes a major portion of the flagellar organelle and consists of four rings (L,P,S, and M) mounted on a central rod.

It is found in the cell outer membrane. The protein resides in the bacterial flagellum basal body. Its function is as follows. Assembles around the rod to form the L-ring and probably protects the motor/basal body from shearing forces during rotation. The polypeptide is Flagellar L-ring protein (Oleidesulfovibrio alaskensis (strain ATCC BAA-1058 / DSM 17464 / G20) (Desulfovibrio alaskensis)).